Consider the following 281-residue polypeptide: 3-methyl-2-oxobutanoate hydroxymethyltransferase (281 aa).

Positions 44 and 83 each coordinate Mg(2+). 3-methyl-2-oxobutanoate is bound by residues 44 to 45 (DS), Asp-83, and Lys-112. Residue Glu-114 coordinates Mg(2+). Glu-180 serves as the catalytic Proton acceptor. The segment at 251–281 (RNGTFPGPEHSSRMDPAELAAALGSQDQATE) is disordered.

It belongs to the PanB family. As to quaternary structure, homodecamer; pentamer of dimers. The cofactor is Mg(2+).

It localises to the cytoplasm. It carries out the reaction 3-methyl-2-oxobutanoate + (6R)-5,10-methylene-5,6,7,8-tetrahydrofolate + H2O = 2-dehydropantoate + (6S)-5,6,7,8-tetrahydrofolate. It participates in cofactor biosynthesis; (R)-pantothenate biosynthesis; (R)-pantoate from 3-methyl-2-oxobutanoate: step 1/2. Catalyzes the reversible reaction in which hydroxymethyl group from 5,10-methylenetetrahydrofolate is transferred onto alpha-ketoisovalerate to form ketopantoate. This is 3-methyl-2-oxobutanoate hydroxymethyltransferase from Chloroflexus aurantiacus (strain ATCC 29364 / DSM 637 / Y-400-fl).